Reading from the N-terminus, the 306-residue chain is Beta-lactamase (306 aa).

A signal peptide (tat-type signal) is located at residues 1-34; that stretch reads MDRTTARPNRRAVLATGVGAALAATAAAAGPAHA. Catalysis depends on Ser82, which acts as the Acyl-ester intermediate. Substrate is bound at residue 250–252; that stretch reads KTG.

This sequence belongs to the class-A beta-lactamase family. Predicted to be exported by the Tat system. The position of the signal peptide cleavage has not been experimentally proven.

The catalysed reaction is a beta-lactam + H2O = a substituted beta-amino acid. This is Beta-lactamase (blaF) from Streptomyces fradiae (Streptomyces roseoflavus).